The chain runs to 72 residues: UPF0150 protein ssl0738 (72 aa).

The protein belongs to the UPF0150 family.

The sequence is that of UPF0150 protein ssl0738 from Synechocystis sp. (strain ATCC 27184 / PCC 6803 / Kazusa).